We begin with the raw amino-acid sequence, 263 residues long: Endonuclease 8 (263 aa).

Catalysis depends on P2, which acts as the Schiff-base intermediate with DNA. E3 serves as the catalytic Proton donor. Catalysis depends on K53, which acts as the Proton donor; for beta-elimination activity. The DNA site is built by Q70, R125, and N169. The FPG-type zinc finger occupies 229-263 (KVFHRDGEACERCGGIIEKTTLSSRPFYWCPHCQK). The active-site Proton donor; for delta-elimination activity is the R253.

This sequence belongs to the FPG family. It depends on Zn(2+) as a cofactor.

The catalysed reaction is 2'-deoxyribonucleotide-(2'-deoxyribose 5'-phosphate)-2'-deoxyribonucleotide-DNA = a 3'-end 2'-deoxyribonucleotide-(2,3-dehydro-2,3-deoxyribose 5'-phosphate)-DNA + a 5'-end 5'-phospho-2'-deoxyribonucleoside-DNA + H(+). Its function is as follows. Involved in base excision repair of DNA damaged by oxidation or by mutagenic agents. Acts as a DNA glycosylase that recognizes and removes damaged bases. Has a preference for oxidized pyrimidines, such as thymine glycol, 5,6-dihydrouracil and 5,6-dihydrothymine. Has AP (apurinic/apyrimidinic) lyase activity and introduces nicks in the DNA strand. Cleaves the DNA backbone by beta-delta elimination to generate a single-strand break at the site of the removed base with both 3'- and 5'-phosphates. The chain is Endonuclease 8 from Salmonella paratyphi A (strain AKU_12601).